We begin with the raw amino-acid sequence, 37 residues long: Alpha-conotoxin LvIA (37 aa).

Residues 1-20 constitute a propeptide that is removed on maturation; the sequence is FRGRDAAAKASGLVGLTDRR. 2 cysteine pairs are disulfide-bonded: Cys22-Cys28 and Cys23-Cys36. The tract at residues 24–26 is ser-Xaa-Pro motif, crucial for potent interaction with nAChR; sequence SHP. Position 36 is a cysteine amide (Cys36).

This sequence belongs to the conotoxin A superfamily. As to expression, expressed by the venom duct.

The protein localises to the secreted. Functionally, alpha-conotoxins act on postsynaptic membranes, they bind to the nicotinic acetylcholine receptors (nAChR) and thus inhibit them. This toxin blocks alpha-3-beta-2/CHRNA3-CHRNB2 nAChR with high selectivity (IC(50)=8.67 nM (on rat) and 17.5 (on human)). Also has weaker activity on alpha-6/alpha-3-beta-2-beta-3 (CHRNA6/CHRNA3-CHRNB2-CHRNB3) (IC(50)=108 nM (on rat)), alpha-6/alpha-3-beta-4 (CHRNA6/CHRNA3-CHRNB4) (IC(50)=121 nM (on rat)), alpha-3-beta-4 (CHRNA3-CHRNB4) (IC(50)=148 nM (on rat)), and alpha-7/CHRNA7 nAChRs (IC(50)=3000 nM (on rat)). When tested on mouse with hot-plate tests, this toxin significantly increases the base pain threshold and shows analgesic effects. The polypeptide is Alpha-conotoxin LvIA (Conus lividus (Livid cone)).